Here is a 750-residue protein sequence, read N- to C-terminus: Photosystem I P700 chlorophyll a apoprotein A1 (750 aa).

A run of 8 helical transmembrane segments spans residues 70–93 (VFSAHFGQLSIIFLWLSGMYFHGA), 156–179 (LYCTAIGALVFAALMLFAGWFHYH), 195–219 (LNHHLAGLLGLGSLSWAGHQVHVSL), 291–309 (IAHHHLAIAILFLIAGHMY), 346–369 (WHAQLSLNLAMLGSLTIVVAHHMY), 385–411 (LSLFTHHMWIGGFLIVGAAAHAAIFMV), 433–455 (AIISHLNWACIFLGFHSFGLYIH), and 531–549 (FLVHHIHAFTIHVTVLILL). Residues Cys573 and Cys582 each coordinate [4Fe-4S] cluster. 2 helical membrane-spanning segments follow: residues 589-610 (HVFLGLFWMYNSISVVIFHFSW) and 664-686 (LSAYGLFFLGAHFVWAFSLMFLF). His675 lines the chlorophyll a' pocket. Chlorophyll a-binding residues include Met683 and Tyr691. Trp692 lines the phylloquinone pocket. The helical transmembrane segment at 724–744 (AVGVTHYLLGGIATTWAFFLA) threads the bilayer.

The protein belongs to the PsaA/PsaB family. As to quaternary structure, the PsaA/B heterodimer binds the P700 chlorophyll special pair and subsequent electron acceptors. PSI consists of a core antenna complex that captures photons, and an electron transfer chain that converts photonic excitation into a charge separation. The eukaryotic PSI reaction center is composed of at least 11 subunits. P700 is a chlorophyll a/chlorophyll a' dimer, A0 is one or more chlorophyll a, A1 is one or both phylloquinones and FX is a shared 4Fe-4S iron-sulfur center. is required as a cofactor.

The protein localises to the plastid. It localises to the chloroplast thylakoid membrane. The enzyme catalyses reduced [plastocyanin] + hnu + oxidized [2Fe-2S]-[ferredoxin] = oxidized [plastocyanin] + reduced [2Fe-2S]-[ferredoxin]. PsaA and PsaB bind P700, the primary electron donor of photosystem I (PSI), as well as the electron acceptors A0, A1 and FX. PSI is a plastocyanin-ferredoxin oxidoreductase, converting photonic excitation into a charge separation, which transfers an electron from the donor P700 chlorophyll pair to the spectroscopically characterized acceptors A0, A1, FX, FA and FB in turn. Oxidized P700 is reduced on the lumenal side of the thylakoid membrane by plastocyanin. The chain is Photosystem I P700 chlorophyll a apoprotein A1 from Vitis vinifera (Grape).